The sequence spans 804 residues: Phenylalanine--tRNA ligase beta subunit (804 aa).

The tRNA-binding domain occupies 38-148; that stretch reads RAAFRAFTIA…ENAPVGTSFA (111 aa). The B5 domain maps to 401-476; that stretch reads HTARVIDFPV…RIHGINRIDP (76 aa). Mg(2+)-binding residues include aspartate 454, aspartate 460, glutamate 463, and glutamate 464. Residues 710–803 form the FDX-ACB domain; sequence SLFQSLKRDY…VAKQTGGVLR (94 aa).

Belongs to the phenylalanyl-tRNA synthetase beta subunit family. Type 1 subfamily. In terms of assembly, tetramer of two alpha and two beta subunits. Mg(2+) is required as a cofactor.

It localises to the cytoplasm. It carries out the reaction tRNA(Phe) + L-phenylalanine + ATP = L-phenylalanyl-tRNA(Phe) + AMP + diphosphate + H(+). The chain is Phenylalanine--tRNA ligase beta subunit from Brucella suis biovar 1 (strain 1330).